We begin with the raw amino-acid sequence, 289 residues long: Segregation and condensation protein A (289 aa).

A compositionally biased stretch (basic and acidic residues) spans 1–18 (MSEDRRSPTDEAPREGEL). The tract at residues 1–24 (MSEDRRSPTDEAPREGELPRSPGD) is disordered.

It belongs to the ScpA family. As to quaternary structure, component of the Structural Maintenance of Chromosome (SMC) condensin-like complex composed of ScpA, ScpB and the Smc homodimer. ScpA and ScpB bind to the head domain of Smc. The presence of the three proteins is required for the association of the complex with DNA.

Its subcellular location is the cytoplasm. Its function is as follows. A conditionally essential component of the chromosome segregation machinery. Participates in chromosomal partition during cell division. Important for positioning of ParB-parS complexes (ori of replication) and of the ter replication site, as well as for segration of the ParB-parS complex and thus chromosome segregation. May act via the formation of a condensin-like complex containing Smc, ScpA and ScpB that pulls DNA away from mid-cell into both cell halves. The protein is Segregation and condensation protein A of Myxococcus xanthus (strain DK1622).